Consider the following 478-residue polypeptide: RNA pseudouridine synthase 3, mitochondrial (478 aa).

A mitochondrion-targeting transit peptide spans 1 to 20 (MWKAKTCFRQIYLTVLIRRY). An S4 RNA-binding domain is found at 92–162 (EEIYDKAIQT…MRISKRYDTI (71 aa)). Residue aspartate 232 is part of the active site.

Belongs to the pseudouridine synthase RluA family.

It is found in the mitochondrion. The catalysed reaction is a uridine in RNA = a pseudouridine in RNA. The protein is RNA pseudouridine synthase 3, mitochondrial of Arabidopsis thaliana (Mouse-ear cress).